Consider the following 609-residue polypeptide: Leukotriene A-4 hydrolase (609 aa).

A peptide-binding positions include 131 to 133 (QCQ) and 263 to 268 (PYGGME). Position 292 (histidine 292) interacts with Zn(2+). Catalysis depends on glutamate 293, which acts as the Proton acceptor. Residues histidine 296 and glutamate 315 each coordinate Zn(2+). Tyrosine 380 serves as the catalytic Proton donor. 560 to 562 (RMK) provides a ligand contact to a peptide.

This sequence belongs to the peptidase M1 family. As to quaternary structure, homodimer. The cofactor is Zn(2+). Expressed in oocytes.

The protein localises to the cytoplasm. It carries out the reaction Release of the N-terminal residue from a tripeptide.. It catalyses the reaction leukotriene A4 + H2O = leukotriene B4. It functions in the pathway lipid metabolism; leukotriene B4 biosynthesis. The epoxide hydrolase activity is mildly restrained by suicide inactivation, possibly involving binding of LTA4 to Tyr-380. Bifunctional zinc metalloenzyme that comprises both epoxide hydrolase (EH) and aminopeptidase activities. Acts as an epoxide hydrolase to catalyze the conversion of leukotriene A4 (LTA4) to the pro-inflammatory mediator leukotriene B4 (LTB4). During the conversion of LTA4 to LTB4, a second product is formed, the isomeric delta6-trans-delta8-cis-LTB4 (5S,12R-dihydroxy-6,10-trans-8,14-cis-eicosatetraenoic acid), with a relative formation of 10% delta6-trans-delta8-cis-LTB4 compared to 90% LTB4. The production of delta6-trans-delta8-cis-LTB4 seems to depend on the phenylalanine residue at position 375. Also has aminopeptidase activity. The polypeptide is Leukotriene A-4 hydrolase (Xenopus laevis (African clawed frog)).